The primary structure comprises 201 residues: Large ribosomal subunit protein uL4 (201 aa).

The tract at residues 46–71 is disordered; that stretch reads QKTRAEVVGSGKKPWRQKGTGRARAG.

It belongs to the universal ribosomal protein uL4 family. Part of the 50S ribosomal subunit.

In terms of biological role, one of the primary rRNA binding proteins, this protein initially binds near the 5'-end of the 23S rRNA. It is important during the early stages of 50S assembly. It makes multiple contacts with different domains of the 23S rRNA in the assembled 50S subunit and ribosome. Its function is as follows. Forms part of the polypeptide exit tunnel. The chain is Large ribosomal subunit protein uL4 from Shewanella piezotolerans (strain WP3 / JCM 13877).